The following is a 993-amino-acid chain: DNA-binding protein SMUBP-2 (993 aa).

N-acetylalanine is present on alanine 2. ATP-binding positions include 214–221 (GPPGTGKT), glutamine 403, tyrosine 442, and glutamate 571. Positions 638–785 (TAFEYLDDIV…KRRFITVSKR (148 aa)) are SS DNA-binding. 3 disordered regions span residues 651 to 723 (YSHE…VESQ), 782 to 828 (VSKR…PDQP), and 841 to 879 (VRSA…DLPT). 2 stretches are compositionally biased toward polar residues: residues 653 to 662 (HENSQGSSHA) and 669 to 681 (PATS…QRQE). One can recognise an R3H domain in the interval 723–786 (QDGVDHFRAM…RRFITVSKRA (64 aa)). Over residues 818-828 (PPREQRGPDQP) the composition is skewed to basic and acidic residues. The segment covering 842-859 (RSAQGQPASKEQQASGQQ) has biased composition (polar residues). The short motif at 864-868 (KKKKK) is the Nuclear localization signal element. Residues 891-940 (VKADNTCGFAKCTAGVTTLGQFCQLCSRRYCLSHHLPEIHGCGERARAHA) form an AN1-type zinc finger. The Zn(2+) site is built by cysteine 897, cysteine 902, cysteine 913, cysteine 916, cysteine 921, histidine 924, histidine 930, and cysteine 932. The interval 971-993 (RRLDKKLSELSNQRTSRRKERGT) is disordered.

Belongs to the DNA2/NAM7 helicase family. In terms of assembly, homooligomer. Interacts with RUVBL1. Interacts with RUVBL2. Interacts with GTF3C1. Interacts with ABT1. Interacts with ribosomes. In terms of tissue distribution, expressed in all tissues examined. Expressed in the developing and adult human brain, with highest expression in the cerebellum. Moderately expressed in fibroblasts.

It localises to the nucleus. It is found in the cytoplasm. The protein resides in the cell projection. The protein localises to the axon. The enzyme catalyses ATP + H2O = ADP + phosphate + H(+). In terms of biological role, 5' to 3' helicase that unwinds RNA and DNA duplexes in an ATP-dependent reaction. Specific to 5'-phosphorylated single-stranded guanine-rich sequences. May play a role in RNA metabolism, ribosome biogenesis or initiation of translation. May play a role in regulation of transcription. Interacts with tRNA-Tyr. The sequence is that of DNA-binding protein SMUBP-2 (IGHMBP2) from Homo sapiens (Human).